Here is an 855-residue protein sequence, read N- to C-terminus: Protein KRI1 homolog (855 aa).

Disordered regions lie at residues 47–67, 82–117, 130–196, 312–342, 424–453, and 589–855; these read VSESEFDSDSSSSEEDEVDPK, KDPCIYDKGTKFFSESSGDEDDKDGEAPKKKKKAKP, EHNG…KTKE, SLRRTDDKRKEKRKELKERKDQEKQQKMKEL, YDPRQHANGGGEDYEGHCEDDDFNMDCDYD, and KSLY…KKDN. Over residues 48 to 64 the composition is skewed to acidic residues; it reads SESEFDSDSSSSEEDEV. Residues 82 to 91 are compositionally biased toward basic and acidic residues; it reads KDPCIYDKGT. Phosphoserine is present on residues S95, S97, S98, S137, and S138. The span at 160–176 shows a compositional bias: basic and acidic residues; it reads EEERRLKAEFRKVMNKE. S179 carries the post-translational modification Phosphoserine. The stretch at 307 to 362 forms a coiled coil; sequence RTIEQSLRRTDDKRKEKRKELKERKDQEKQQKMKELELVKEMKRKEIDEKIRKLKA. Residues 441–452 show a composition bias toward acidic residues; that stretch reads CEDDDFNMDCDY. The segment covering 609–619 has biased composition (low complexity); that stretch reads VTPAEATAPAE. A compositionally biased stretch (basic residues) spans 630–640; that stretch reads KSKRKRLKRKA. Basic and acidic residues-rich tracts occupy residues 650–664 and 674–692; these read VLKEESDSKDPKEAD and SSKKKVDTPSKKGKDDANQ. Polar residues-rich tracts occupy residues 720–748, 756–773, and 792–805; these read VQNGFQKPQNQANKSAKTKSNQPFKTTES, SNGNNPFNKPQSKSQQRQ, and ANGTNPFKKSNQKP. Low complexity predominate over residues 812–826; the sequence is KKTNNFKAKNKQNNN. A compositionally biased stretch (basic residues) spans 842-855; it reads RKFHKREKYGKKDN.

The protein belongs to the KRI1 family.

The protein is Protein KRI1 homolog of Drosophila melanogaster (Fruit fly).